Consider the following 331-residue polypeptide: Ketol-acid reductoisomerase (NADP(+)) (331 aa).

In terms of domain architecture, KARI N-terminal Rossmann spans 2–182; the sequence is AQLFYDSDAD…GGTRAGILET (181 aa). NADP(+) is bound by residues 25 to 28, Ser51, Ser53, and 83 to 86; these read YGSQ and DEFQ. His108 is an active-site residue. Gly134 contacts NADP(+). Residues 183-328 enclose the KARI C-terminal knotted domain; sequence NFKEETETDL…KGLRAMFSWL (146 aa). Residues Asp191, Glu195, Glu227, and Glu231 each contribute to the Mg(2+) site. A substrate-binding site is contributed by Ser252.

This sequence belongs to the ketol-acid reductoisomerase family. Mg(2+) is required as a cofactor.

The catalysed reaction is (2R)-2,3-dihydroxy-3-methylbutanoate + NADP(+) = (2S)-2-acetolactate + NADPH + H(+). It carries out the reaction (2R,3R)-2,3-dihydroxy-3-methylpentanoate + NADP(+) = (S)-2-ethyl-2-hydroxy-3-oxobutanoate + NADPH + H(+). The protein operates within amino-acid biosynthesis; L-isoleucine biosynthesis; L-isoleucine from 2-oxobutanoate: step 2/4. It participates in amino-acid biosynthesis; L-valine biosynthesis; L-valine from pyruvate: step 2/4. Functionally, involved in the biosynthesis of branched-chain amino acids (BCAA). Catalyzes an alkyl-migration followed by a ketol-acid reduction of (S)-2-acetolactate (S2AL) to yield (R)-2,3-dihydroxy-isovalerate. In the isomerase reaction, S2AL is rearranged via a Mg-dependent methyl migration to produce 3-hydroxy-3-methyl-2-ketobutyrate (HMKB). In the reductase reaction, this 2-ketoacid undergoes a metal-dependent reduction by NADPH to yield (R)-2,3-dihydroxy-isovalerate. This is Ketol-acid reductoisomerase (NADP(+)) from Prochlorococcus marinus (strain MIT 9303).